Consider the following 225-residue polypeptide: NAD(P)H-quinone oxidoreductase subunit K, chloroplastic (225 aa).

[4Fe-4S] cluster contacts are provided by Cys43, Cys44, Cys108, and Cys139.

The protein belongs to the complex I 20 kDa subunit family. As to quaternary structure, NDH is composed of at least 16 different subunits, 5 of which are encoded in the nucleus. [4Fe-4S] cluster is required as a cofactor.

It is found in the plastid. The protein resides in the chloroplast thylakoid membrane. The catalysed reaction is a plastoquinone + NADH + (n+1) H(+)(in) = a plastoquinol + NAD(+) + n H(+)(out). The enzyme catalyses a plastoquinone + NADPH + (n+1) H(+)(in) = a plastoquinol + NADP(+) + n H(+)(out). In terms of biological role, NDH shuttles electrons from NAD(P)H:plastoquinone, via FMN and iron-sulfur (Fe-S) centers, to quinones in the photosynthetic chain and possibly in a chloroplast respiratory chain. The immediate electron acceptor for the enzyme in this species is believed to be plastoquinone. Couples the redox reaction to proton translocation, and thus conserves the redox energy in a proton gradient. This is NAD(P)H-quinone oxidoreductase subunit K, chloroplastic from Liriodendron tulipifera (Tuliptree).